A 638-amino-acid polypeptide reads, in one-letter code: Autolysin (638 aa).

The signal sequence occupies residues 1 to 28; that stretch reads MSLATRRFGAAAALLVAACVLCTAPAWA. Residues 29 to 183 constitute a propeptide, activation peptide; sequence QNETTGTGMV…LKSILKGSQK (155 aa). Asn30 carries an N-linked (GlcNAc...) asparagine glycan. A Cysteine switch motif is present at residues 95-102; sequence PRCNVPRA. Cys97 is a binding site for Zn(2+). N-linked (GlcNAc...) asparagine glycosylation is present at Asn126. The tract at residues 269–292 is disordered; the sequence is VTPPPRPPRPPRPPPRAGSTISSL. The segment covering 270-284 has biased composition (pro residues); that stretch reads TPPPRPPRPPRPPPR. Asn296 is a glycosylation site (N-linked (GlcNAc...) asparagine). His396 lines the Zn(2+) pocket. The active site involves Glu397. 2 residues coordinate Zn(2+): His400 and His406. Residues Asn458, Asn465, Asn470, and Asn523 are each glycosylated (N-linked (GlcNAc...) asparagine).

It belongs to the peptidase M11 family. Zn(2+) serves as cofactor. In terms of processing, present in 2 forms: an inactive V-form in vegetative cells and an active and soluble G-form. The V-form enzyme may be converted to the G-form enzyme during gametic differentiation under nitrogen-starved conditions.

It localises to the periplasm. Its subcellular location is the secreted. The protein localises to the cell wall. The enzyme catalyses Cleavage of the proline- and hydroxyproline-rich proteins of the Chlamydomonas cell wall. Also cleaves azocasein, gelatin and Leu-Trp-Met-|-Arg-Phe-Ala.. In terms of biological role, mediates digestion of the cell walls of the 2 mating type gametes during mating as a necessary prelude to cell fusion. This enzyme acts specifically on the framework proteins (inner wall) of the cell wall, cleaving several model peptides at specific sites. This chain is Autolysin, found in Chlamydomonas reinhardtii (Chlamydomonas smithii).